A 646-amino-acid chain; its full sequence is MSSRKQARLEAKQFIDTLSVQPYPNSSKVYVEGSRPDIRVPMREISLADSLIGGTKEAPIFEPNEPVRVYDTSGVYTDPEHTIDLYNGLPKLREGWIEERSDTELLDEVSSVYTKERLEDETLDDLRYGNLPRIRRAKDGQCVTQLHYARQGIITPEMEYIALRENMGRAQYRDEVLNQQHPGQSFGANLPKDITAEFVRKEVAEGRAIIPSNINHPESEPMIIGRNFLVKVNANIGNSSVTSSIEEEVEKLVWATRWGGDTVMDLSTGRNIHETREWILRNSPVPIGTVPMYQALEKVNGVAENLNWEVMRDTLIEQAEQGVDYFTIHAGLLLRYVPMTAKRVTGIVSRGGSIIAKWCLAHHQESFLYTHFREICEICAKYDVAISLGDGLRPGSVADANDEAQFAELRTLGELTKVAWEYDVQVIIEGPGHVPMHMIKENMEEQLEHCHEAPFYTLGPLTTDVAPGYDHITSGIGAAMIGWYGCAMLCYVTPKEHLGLPNKEDVKVGMITYKLAAHAADLAKGHPGAQVRDNALSKARFEFRWEDQFNLSLDPDTARAFHDETLPQESGKVAHFCSMCGPKFCSMKISQEVREYAKDTEQVAADQAISIKMLDDPLEGMRQKSQEFRDTGSELYHPAAYAEVSD.

Residues Asn235, Met264, Tyr293, His329, 349–351 (SRG), 390–393 (DGLR), and Glu429 each bind substrate. His433 serves as a coordination point for Zn(2+). Tyr456 provides a ligand contact to substrate. His497 provides a ligand contact to Zn(2+). [4Fe-4S] cluster is bound by residues Cys577, Cys580, and Cys585.

It belongs to the ThiC family. As to quaternary structure, homodimer. [4Fe-4S] cluster serves as cofactor.

It catalyses the reaction 5-amino-1-(5-phospho-beta-D-ribosyl)imidazole + S-adenosyl-L-methionine = 4-amino-2-methyl-5-(phosphooxymethyl)pyrimidine + CO + 5'-deoxyadenosine + formate + L-methionine + 3 H(+). Its pathway is cofactor biosynthesis; thiamine diphosphate biosynthesis. Functionally, catalyzes the synthesis of the hydroxymethylpyrimidine phosphate (HMP-P) moiety of thiamine from aminoimidazole ribotide (AIR) in a radical S-adenosyl-L-methionine (SAM)-dependent reaction. In Vibrio campbellii (strain ATCC BAA-1116), this protein is Phosphomethylpyrimidine synthase.